A 296-amino-acid chain; its full sequence is Transcription repressor OFP3 (296 aa).

Disordered stretches follow at residues 27–115 (MSRS…SANA) and 131–196 (PSDQ…AHSS). Residues 60-69 (LSSTAHHPQA) show a composition bias toward polar residues. Over residues 78–88 (SFKRKIKRKTV) the composition is skewed to basic residues. Low complexity predominate over residues 92–115 (SSRLKLSTSSSLNHRSKSSSSANA). Over residues 136 to 159 (FVHDPEPHSSIDIKDELSVRKLDD) the composition is skewed to basic and acidic residues. Residues 228–287 (IVLSSVDPEKDFRESMVEMIMENKMREQKDLEDLLACYLSLNSSEYHDVIIKAFENTWLH) enclose the OVATE domain.

Interacts with BLH1, BLH3, KNAT5 and KNAT7.

The protein resides in the nucleus. Transcriptional repressor that may regulate multiple aspects of plant growth and development through the regulation of BEL1-LIKE (BLH) and KNOX TALE (KNAT) homeodomain transcription factors. The sequence is that of Transcription repressor OFP3 (OFP3) from Arabidopsis thaliana (Mouse-ear cress).